The sequence spans 289 residues: Oxaloacetate decarboxylase (289 aa).

A substrate-binding site is contributed by Ser47. Asp85 lines the Mg(2+) pocket. Substrate-binding residues include Arg156 and His232.

Belongs to the isocitrate lyase/PEP mutase superfamily. Oxaloacetate decarboxylase family. In terms of assembly, homotetramer; dimer of dimers. It depends on Mg(2+) as a cofactor.

It carries out the reaction oxaloacetate + H(+) = pyruvate + CO2. Catalyzes the decarboxylation of oxaloacetate into pyruvate. Seems to play a role in maintaining cellular concentrations of bicarbonate and pyruvate. This chain is Oxaloacetate decarboxylase, found in Rhodopseudomonas palustris (strain BisB5).